A 209-amino-acid polypeptide reads, in one-letter code: Thiamine-phosphate synthase (209 aa).

4-amino-2-methyl-5-(diphosphooxymethyl)pyrimidine contacts are provided by residues 40–44 (QLREK) and Asn72. 2 residues coordinate Mg(2+): Asp73 and Asp92. Position 111 (Ser111) interacts with 4-amino-2-methyl-5-(diphosphooxymethyl)pyrimidine. 137–139 (TNS) contacts 2-[(2R,5Z)-2-carboxy-4-methylthiazol-5(2H)-ylidene]ethyl phosphate. Lys140 contributes to the 4-amino-2-methyl-5-(diphosphooxymethyl)pyrimidine binding site. 2-[(2R,5Z)-2-carboxy-4-methylthiazol-5(2H)-ylidene]ethyl phosphate contacts are provided by residues Gly167 and 187–188 (IS).

It belongs to the thiamine-phosphate synthase family. Mg(2+) serves as cofactor.

It catalyses the reaction 2-[(2R,5Z)-2-carboxy-4-methylthiazol-5(2H)-ylidene]ethyl phosphate + 4-amino-2-methyl-5-(diphosphooxymethyl)pyrimidine + 2 H(+) = thiamine phosphate + CO2 + diphosphate. It carries out the reaction 2-(2-carboxy-4-methylthiazol-5-yl)ethyl phosphate + 4-amino-2-methyl-5-(diphosphooxymethyl)pyrimidine + 2 H(+) = thiamine phosphate + CO2 + diphosphate. The enzyme catalyses 4-methyl-5-(2-phosphooxyethyl)-thiazole + 4-amino-2-methyl-5-(diphosphooxymethyl)pyrimidine + H(+) = thiamine phosphate + diphosphate. It participates in cofactor biosynthesis; thiamine diphosphate biosynthesis; thiamine phosphate from 4-amino-2-methyl-5-diphosphomethylpyrimidine and 4-methyl-5-(2-phosphoethyl)-thiazole: step 1/1. In terms of biological role, condenses 4-methyl-5-(beta-hydroxyethyl)thiazole monophosphate (THZ-P) and 2-methyl-4-amino-5-hydroxymethyl pyrimidine pyrophosphate (HMP-PP) to form thiamine monophosphate (TMP). In Clostridium tetani (strain Massachusetts / E88), this protein is Thiamine-phosphate synthase.